A 136-amino-acid chain; its full sequence is Histone H3, embryonic (136 aa).

The tract at residues 1 to 43 (MARTKQTARKSTGGKAPRKQLATKAARKSAPATGGVKKPHRYR) is disordered. At Lys5 the chain carries N6-methylated lysine. Residue Lys10 is modified to N6-acetyllysine; alternate. Lys10 is modified (N6-methylated lysine; alternate). A Phosphoserine modification is found at Ser11. Residues Lys15 and Lys24 each carry the N6-acetyllysine modification. Lys28, Lys37, and Lys80 each carry N6-methylated lysine.

It belongs to the histone H3 family. In terms of assembly, the nucleosome is a histone octamer containing two molecules each of H2A, H2B, H3 and H4 assembled in one H3-H4 heterotetramer and two H2A-H2B heterodimers. The octamer wraps approximately 147 bp of DNA. In terms of processing, acetylation is generally linked to gene activation. Methylation at Lys-5 is linked to gene activation. Methylation at Lys-10 is linked to gene repression.

The protein localises to the nucleus. It is found in the chromosome. In terms of biological role, core component of nucleosome. Nucleosomes wrap and compact DNA into chromatin, limiting DNA accessibility to the cellular machineries which require DNA as a template. Histones thereby play a central role in transcription regulation, DNA repair, DNA replication and chromosomal stability. DNA accessibility is regulated via a complex set of post-translational modifications of histones, also called histone code, and nucleosome remodeling. The sequence is that of Histone H3, embryonic from Paracentrotus lividus (Common sea urchin).